A 246-amino-acid polypeptide reads, in one-letter code: Aliphatic sulfonates import ATP-binding protein SsuB 2 (246 aa).

Positions 4 to 218 constitute an ABC transporter domain; the sequence is VTVRGLRRAF…RRDPRFEQAR (215 aa). An ATP-binding site is contributed by 36-43; it reads GRSGGGKT.

This sequence belongs to the ABC transporter superfamily. Aliphatic sulfonates importer (TC 3.A.1.17.2) family. In terms of assembly, the complex is composed of two ATP-binding proteins (SsuB), two transmembrane proteins (SsuC) and a solute-binding protein (SsuA).

Its subcellular location is the cell membrane. The enzyme catalyses ATP + H2O + aliphatic sulfonate-[sulfonate-binding protein]Side 1 = ADP + phosphate + aliphatic sulfonateSide 2 + [sulfonate-binding protein]Side 1.. Part of the ABC transporter complex SsuABC involved in aliphatic sulfonates import. Responsible for energy coupling to the transport system. The protein is Aliphatic sulfonates import ATP-binding protein SsuB 2 of Frankia alni (strain DSM 45986 / CECT 9034 / ACN14a).